A 339-amino-acid polypeptide reads, in one-letter code: Protein H339R (339 aa).

Belongs to the asfivirus H339R family. As to quaternary structure, interacts with host NACA (alpha chain of nascent polypeptide-associated complex).

It is found in the host cytoplasm. It localises to the host nucleus. In African swine fever virus (isolate Tick/South Africa/Pretoriuskop Pr4/1996) (ASFV), this protein is Protein H339R.